The sequence spans 364 residues: Phosphoserine aminotransferase (364 aa).

An L-glutamate-binding site is contributed by R41. Residues 75-76, W100, T155, D175, and Q198 contribute to the pyridoxal 5'-phosphate site; that span reads AS. K199 is modified (N6-(pyridoxal phosphate)lysine). Pyridoxal 5'-phosphate is bound at residue 239-240; sequence NT.

The protein belongs to the class-V pyridoxal-phosphate-dependent aminotransferase family. SerC subfamily. In terms of assembly, homodimer. The cofactor is pyridoxal 5'-phosphate.

The protein resides in the cytoplasm. It catalyses the reaction O-phospho-L-serine + 2-oxoglutarate = 3-phosphooxypyruvate + L-glutamate. The catalysed reaction is 4-(phosphooxy)-L-threonine + 2-oxoglutarate = (R)-3-hydroxy-2-oxo-4-phosphooxybutanoate + L-glutamate. Its pathway is amino-acid biosynthesis; L-serine biosynthesis; L-serine from 3-phospho-D-glycerate: step 2/3. Its function is as follows. Catalyzes the reversible conversion of 3-phosphohydroxypyruvate to phosphoserine and of 3-hydroxy-2-oxo-4-phosphonooxybutanoate to phosphohydroxythreonine. In Streptococcus uberis (strain ATCC BAA-854 / 0140J), this protein is Phosphoserine aminotransferase.